The primary structure comprises 20 residues: L-amino-acid oxidase L1 (20 aa).

Belongs to the flavin monoamine oxidase family. FIG1 subfamily. Monomer. This is in contrast with most of its orthologs, that are non-covalently linked homodimers. FAD serves as cofactor. Post-translationally, N-glycosylated. As to expression, expressed by the venom gland.

It localises to the secreted. It carries out the reaction an L-alpha-amino acid + O2 + H2O = a 2-oxocarboxylate + H2O2 + NH4(+). The enzyme catalyses L-leucine + O2 + H2O = 4-methyl-2-oxopentanoate + H2O2 + NH4(+). The catalysed reaction is L-phenylalanine + O2 + H2O = 3-phenylpyruvate + H2O2 + NH4(+). It catalyses the reaction L-tryptophan + O2 + H2O = indole-3-pyruvate + H2O2 + NH4(+). It carries out the reaction L-methionine + O2 + H2O = 4-methylsulfanyl-2-oxobutanoate + H2O2 + NH4(+). The enzyme catalyses L-isoleucine + O2 + H2O = (S)-3-methyl-2-oxopentanoate + H2O2 + NH4(+). The catalysed reaction is L-tyrosine + O2 + H2O = 3-(4-hydroxyphenyl)pyruvate + H2O2 + NH4(+). In terms of biological role, catalyzes an oxidative deamination of predominantly hydrophobic and aromatic L-amino acids, thus producing hydrogen peroxide that may contribute to the diverse toxic effects of this enzyme. Is active on L-Met, L-Ile, L-Leu, L-Phe, L-Trp, and L-Tyr. Exhibits diverse biological activities, such as hemorrhage, hemolysis, edema, apoptosis of vascular endothelial cells or tumor cell lines, antibacterial and antiparasitic activities, as well as regulation of platelet aggregation. Its effect on platelets is controversial, since it either induces aggregation or inhibits agonist-induced aggregation. These different effects are probably due to different experimental conditions. The polypeptide is L-amino-acid oxidase L1 (Daboia russelii (Russel's viper)).